We begin with the raw amino-acid sequence, 42 residues long: Gastric inhibitory polypeptide (42 aa).

This sequence belongs to the glucagon family.

The protein localises to the secreted. Its function is as follows. Potent stimulator of insulin secretion and relatively poor inhibitor of gastric acid secretion. The protein is Gastric inhibitory polypeptide (GIP) of Sus scrofa (Pig).